An 83-amino-acid polypeptide reads, in one-letter code: Cytochrome b559 subunit alpha (83 aa).

Residues 21 to 35 (VIHSITIPSLFIAGW) form a helical membrane-spanning segment. Residue His-23 participates in heme binding.

Belongs to the PsbE/PsbF family. As to quaternary structure, heterodimer of an alpha subunit and a beta subunit. PSII is composed of 1 copy each of membrane proteins PsbA, PsbB, PsbC, PsbD, PsbE, PsbF, PsbH, PsbI, PsbJ, PsbK, PsbL, PsbM, PsbT, PsbX, PsbY, PsbZ, Psb30/Ycf12, at least 3 peripheral proteins of the oxygen-evolving complex and a large number of cofactors. It forms dimeric complexes. It depends on heme b as a cofactor.

The protein resides in the plastid. The protein localises to the chloroplast thylakoid membrane. This b-type cytochrome is tightly associated with the reaction center of photosystem II (PSII). PSII is a light-driven water:plastoquinone oxidoreductase that uses light energy to abstract electrons from H(2)O, generating O(2) and a proton gradient subsequently used for ATP formation. It consists of a core antenna complex that captures photons, and an electron transfer chain that converts photonic excitation into a charge separation. This chain is Cytochrome b559 subunit alpha, found in Chara vulgaris (Common stonewort).